Here is a 638-residue protein sequence, read N- to C-terminus: CTTNBP2 N-terminal-like protein (638 aa).

A coiled-coil region spans residues 87-284 (MKQCKNMQER…KDLEAAQQHR (198 aa)). Disordered stretches follow at residues 280-303 (AQQH…TATE), 360-430 (RELT…PCSS), 463-490 (RHKF…LSPT), and 514-621 (NQGP…CSPS). The residue at position 285 (Ser-285) is a Phosphoserine. The segment covering 360-371 (RELTSDSSTENQ) has biased composition (polar residues). Low complexity-rich tracts occupy residues 401–430 (TMPS…PCSS) and 467–477 (QSQADQDQQAS). Ser-481, Ser-488, Ser-522, Ser-526, Ser-559, Ser-562, and Ser-567 each carry phosphoserine. A compositionally biased stretch (polar residues) spans 514 to 528 (NQGPIKPVSPNSSPF). A phosphothreonine mark is found at Thr-569 and Thr-589. The span at 589–620 (TPSQSATTPVTKTHSQASSLAATEDLASSCSP) shows a compositional bias: polar residues. Position 591 is a phosphoserine (Ser-591).

In terms of assembly, interacts with CTTN/cortactin; this interaction may redistribute CTTN to stress fibers. May form homomers. Associates with the core of STRIPAK complexes composed of PP2A catalytic and scaffolding subunits, the striatins (PP2A regulatory subunits), the striatin-associated proteins MOB4, STRIP1 and STRIP2, PDCD10 and members of the STE20 kinases, such as STK24 and STK26. As to expression, predominantly expressed in skin, also detectable in spleen and lung (at protein level). Very low levels, if any, in brain (at protein level).

The protein resides in the cell projection. It localises to the lamellipodium. It is found in the cytoplasm. Its subcellular location is the cytoskeleton. The protein localises to the stress fiber. Its function is as follows. Regulates lamellipodial actin dynamics in a CTTN-dependent manner. Associates with core striatin-interacting phosphatase and kinase (STRIPAK) complex to form CTTNBP2NL-STRIPAK complexes. STRIPAK complexes have critical roles in protein (de)phosphorylation and are regulators of multiple signaling pathways including Hippo, MAPK, nuclear receptor and cytoskeleton remodeling. Different types of STRIPAK complexes are involved in a variety of biological processes such as cell growth, differentiation, apoptosis, metabolism and immune regulation. This chain is CTTNBP2 N-terminal-like protein (Cttnbp2nl), found in Mus musculus (Mouse).